The primary structure comprises 1102 residues: MELENYEQPVVLREDNRRRRRRMKPRSTAASLSSMELIPIEFVLPTSQRNTKTPETALLHVAGHGNVEQMKAQVWLRALETSVSADFYHRLGPDHFLLLYQKKGQWYEIYDKYQVVQTLDCLRYWKVLHRSPGQIHVVQRHAPSEETLAFQRQLNALIGYDVTDVSNVHDDELEFTRRRLVTPRMAEVAGRDPKLYAMHPWVTSKPLPEYLLKKITNNCVFIVIHRSTTSQTIKVSADDTPGTILQSFFTKMAKKKSLMDIPESQNERDFVLRVCGRDEYLVGETPIKNFQWVRQCLKNGEEIHLVLDTPPDPALDEVRKEEWPLVDDCTGVTGYHEQLTIHGKDHESVFTVSLWDCDRKFRVKIRGIDIPVLPRTADLTVFVEANIQYGQQVLCQRRTSPKPFTEEVLWNVWLEFSIKIKDLPKGALLNLQIYCGKAPALSGKTSAEMPSPESKGKAQLLYYVNLLLIDHRFLLRHGEYVLHMWQLSGKGEDQGSFNADKLTSRTNPDKENSMSISILLDNYCHPIALPKHRPTPDPEGDRVRAEMPNQLRKQLEAIIATDPLNPLTAEDKELLWHFRYESLKDPKAYPKLFSSVKWGQQEIVAKTYQLLAKREVWDQSALDVGLTMQLLDCNFSDENVRAIAVQKLESLEDDDVLHYLLQLVQAVKFEPYHDSALARFLLKRGLRNKRIGHFLFWFLRSEIAQSRHYQQRFAVILEAYLRGCGTAMLHDFTQQVQVIDMLQKVTIDIKSLSAEKYDVSSQVISQLKQKLENLQNLNLPQSFRVPYDPGLKAGALVIEKCKVMASKKKPLWLEFKCADPTALSNETIGIIFKHGDDLRQDMLILQILRIMESIWETESLDLCLLPYGCISTGDKIGMIEIVKDATTIAKIQQSTVGNTGAFKDEVLSHWLKEKCPIEEKFQAAVERFVYSCAGYCVATFVLGIGDRHNDNIMISETGNLFHIDFGHILGNYKSFLGINKERVPFVLTPDFLFVMGTSGKKTSLHFQKFQDVCVKAYLALRHHTNLLIILFSMMLMTGMPQLTSKEDIEYIRDALTVGKSEEDAKKYFLDQIEVCRDKGWTVQFNWFLHLVLGIKQGEKHSA.

A PI3K-ABD domain is found at 34–141 (SMELIPIEFV…PGQIHVVQRH (108 aa)). One can recognise a PI3K-RBD domain in the interval 217–309 (NNCVFIVIHR…GEEIHLVLDT (93 aa)). Positions 357–521 (CDRKFRVKIR…NSMSISILLD (165 aa)) constitute a C2 PI3K-type domain. The 183-residue stretch at 541-723 (DRVRAEMPNQ…AVILEAYLRG (183 aa)) folds into the PIK helical domain. The 284-residue stretch at 797–1080 (VIEKCKVMAS…QIEVCRDKGW (284 aa)) folds into the PI3K/PI4K catalytic domain. Positions 803 to 809 (VMASKKK) are G-loop. ATP contacts are provided by residues 829 to 838 (GIIFKHGDDL) and 864 to 872 (LLPYGCIST). The interval 943 to 951 (GIGDRHNDN) is catalytic loop. 961-969 (FHIDFGHIL) serves as a coordination point for ATP. Residues 962–988 (HIDFGHILGNYKSFLGINKERVPFVLT) are activation loop. Thr1024 is subject to Phosphothreonine; by PKA. The residue at position 1101 (Ser1101) is a Phosphoserine; by autocatalysis.

The protein belongs to the PI3/PI4-kinase family. Heterodimer of a catalytic subunit PIK3CG and a PIK3R5 or PIK3R6 regulatory subunit. Interacts with GRK2 through the PIK helical domain. Interaction with GRK2 is required for targeting to agonist-occupied receptor. Interacts with PDE3B; regulates PDE3B activity and thereby cAMP levels in cells. Interacts with TPM2. Interacts with EPHA8; regulates integrin-mediated cell adhesion to substrate. Interacts with HRAS; the interaction is required for membrane recruitment and beta-gamma G protein dimer-dependent activation of the PI3K gamma complex PIK3CG:PIK3R6. In terms of processing, autophosphorylation at Ser-1101 has no effect on the phosphatidylinositol-4,5-bisphosphate 3-kinase activity.

The protein resides in the cytoplasm. Its subcellular location is the cell membrane. It catalyses the reaction a 1,2-diacyl-sn-glycero-3-phospho-(1D-myo-inositol-4,5-bisphosphate) + ATP = a 1,2-diacyl-sn-glycero-3-phospho-(1D-myo-inositol-3,4,5-trisphosphate) + ADP + H(+). It carries out the reaction a 1,2-diacyl-sn-glycero-3-phospho-(1D-myo-inositol) + ATP = a 1,2-diacyl-sn-glycero-3-phospho-(1D-myo-inositol-3-phosphate) + ADP + H(+). The enzyme catalyses a 1,2-diacyl-sn-glycero-3-phospho-(1D-myo-inositol 4-phosphate) + ATP = a 1,2-diacyl-sn-glycero-3-phospho-(1D-myo-inositol-3,4-bisphosphate) + ADP + H(+). The catalysed reaction is L-seryl-[protein] + ATP = O-phospho-L-seryl-[protein] + ADP + H(+). It participates in phospholipid metabolism; phosphatidylinositol phosphate biosynthesis. With respect to regulation, activated by both the alpha and the beta-gamma G proteins following stimulation of G protein-coupled receptors (GPCRs). Activation by GPCRs is assisted by the regulatory subunits (PIK3R5 or PIK3R6) leading to the translocation from the cytosol to the plasma membrane and to kinase activation. When bound to PIK3R5 the PI3K activity of PIK3CG could be activated greater than 100-fold by the beta-gamma G proteins. Functionally, phosphoinositide-3-kinase (PI3K) that phosphorylates PtdIns(4,5)P2 (Phosphatidylinositol 4,5-bisphosphate) to generate phosphatidylinositol 3,4,5-trisphosphate (PIP3). PIP3 plays a key role by recruiting PH domain-containing proteins to the membrane, including AKT1 and PDPK1, activating signaling cascades involved in cell growth, survival, proliferation, motility and morphology. Links G-protein coupled receptor activation to PIP3 production. Involved in immune, inflammatory and allergic responses. Modulates leukocyte chemotaxis to inflammatory sites and in response to chemoattractant agents. May control leukocyte polarization and migration by regulating the spatial accumulation of PIP3 and by regulating the organization of F-actin formation and integrin-based adhesion at the leading edge. Controls motility of dendritic cells. Participates in T-lymphocyte migration. Regulates T-lymphocyte proliferation and cytokine production. Required for B-lymphocyte development and signaling. Together with other PI3Ks are involved in the oxidative burst produced by neutrophils in response to chemotactic agents. Together with PIK3CD regulate neutrophil extravasation. Together with PIK3CB promotes platelet aggregation and thrombosis. Regulates alpha-IIb/beta-3 integrins (ITGA2B/ ITGB3) adhesive function in platelets downstream of P2Y12 through a lipid kinase activity-independent mechanism. May have also a lipid kinase activity-dependent function in platelet aggregation. Involved in endothelial progenitor cell migration. Negative regulator of cardiac contractility. Modulates cardiac contractility by anchoring protein kinase A (PKA) and PDE3B activation, reducing cAMP levels. Regulates cardiac contractility also by promoting beta-adrenergic receptor internalization by binding to GRK2 and by non-muscle tropomyosin phosphorylation. Also has serine/threonine protein kinase activity: both lipid and protein kinase activities are required for beta-adrenergic receptor endocytosis. May also have a scaffolding role in modulating cardiac contractility. Contribute to cardiac hypertrophy under pathological stress. Through simultaneous binding of PDE3B to RAPGEF3 and PIK3R6 is assembled in a signaling complex in which the PI3K gamma complex is activated by RAPGEF3 and which is involved in angiogenesis. In neutrophils, participates in a phospholipase C-activating N-formyl peptide-activated GPCR (G protein-coupled receptor) signaling pathway downstream of RASGRP4-mediated Ras-activation, to promote neutrophil functional responses. This Sus scrofa (Pig) protein is Phosphatidylinositol 4,5-bisphosphate 3-kinase catalytic subunit gamma isoform (PIK3CG).